A 537-amino-acid polypeptide reads, in one-letter code: Probable protein kinase UbiB (537 aa).

A helical membrane pass occupies residues 24–44; the sequence is LLFEQPLLPWWLASLRLLMPW. One can recognise a Protein kinase domain in the interval 126–494; sequence RFDVEPLASA…RRRQGDNWAL (369 aa). Residues 132–140 and Lys-154 contribute to the ATP site; that span reads LASASVAQV. Asp-289 serves as the catalytic Proton acceptor. A run of 2 helical transmembrane segments spans residues 493–513 and 515–535; these read ALRLLGAGLLGGGATLAAGAV and LSAPAAWPAWLMLAAGLYLIV.

The protein belongs to the ABC1 family. UbiB subfamily.

It is found in the cell inner membrane. It functions in the pathway cofactor biosynthesis; ubiquinone biosynthesis [regulation]. In terms of biological role, is probably a protein kinase regulator of UbiI activity which is involved in aerobic coenzyme Q (ubiquinone) biosynthesis. This Pseudomonas entomophila (strain L48) protein is Probable protein kinase UbiB.